The sequence spans 500 residues: Tektin-like protein 1 (500 aa).

Residues 198–229 (MLTWEKEELKSMKRKMEADMEKSEALLKTLAS) adopt a coiled-coil conformation. Y372 is subject to Phosphotyrosine. Residues 420 to 444 (DKLQRHISHVEKNLDELLSMRKKLT) adopt a coiled-coil conformation.

As to quaternary structure, microtubule inner protein component of sperm flagellar doublet microtubules.

It is found in the cytoplasm. The protein resides in the cytoskeleton. It localises to the flagellum axoneme. Microtubule inner protein (MIP) part of the dynein-decorated doublet microtubules (DMTs) in sperm flagellar axoneme, which is required for motile flagellum beating. Forms an extensive interaction network cross-linking the lumen of axonemal doublet microtubules. The sequence is that of Tektin-like protein 1 from Bos taurus (Bovine).